Consider the following 398-residue polypeptide: S-adenosylmethionine decarboxylase proenzyme (398 aa).

Residues E18 and E21 contribute to the active site. S78 acts as the Schiff-base intermediate with substrate; via pyruvic acid in catalysis. Position 78 is a pyruvic acid (Ser); by autocatalysis (S78). The Proton donor; for catalytic activity role is filled by C92. Residues S243 and H256 each act as proton acceptor; for processing activity in the active site.

This sequence belongs to the eukaryotic AdoMetDC family. Requires pyruvate as cofactor. Post-translationally, is synthesized initially as an inactive proenzyme. Formation of the active enzyme involves a self-maturation process in which the active site pyruvoyl group is generated from an internal serine residue via an autocatalytic post-translational modification. Two non-identical subunits are generated from the proenzyme in this reaction, and the pyruvate is formed at the N-terminus of the alpha chain, which is derived from the carboxyl end of the proenzyme. The post-translation cleavage follows an unusual pathway, termed non-hydrolytic serinolysis, in which the side chain hydroxyl group of the serine supplies its oxygen atom to form the C-terminus of the beta chain, while the remainder of the serine residue undergoes an oxidative deamination to produce ammonia and the pyruvoyl group blocking the N-terminus of the alpha chain.

It carries out the reaction S-adenosyl-L-methionine + H(+) = S-adenosyl 3-(methylsulfanyl)propylamine + CO2. It functions in the pathway amine and polyamine biosynthesis; S-adenosylmethioninamine biosynthesis; S-adenosylmethioninamine from S-adenosyl-L-methionine: step 1/1. This Oryza sativa subsp. indica (Rice) protein is S-adenosylmethionine decarboxylase proenzyme (SAMDC).